A 329-amino-acid polypeptide reads, in one-letter code: Phenylalanine--tRNA ligase alpha subunit (329 aa).

A Mg(2+)-binding site is contributed by Glu254.

The protein belongs to the class-II aminoacyl-tRNA synthetase family. Phe-tRNA synthetase alpha subunit type 1 subfamily. In terms of assembly, tetramer of two alpha and two beta subunits. Requires Mg(2+) as cofactor.

Its subcellular location is the cytoplasm. It catalyses the reaction tRNA(Phe) + L-phenylalanine + ATP = L-phenylalanyl-tRNA(Phe) + AMP + diphosphate + H(+). This chain is Phenylalanine--tRNA ligase alpha subunit, found in Histophilus somni (strain 129Pt) (Haemophilus somnus).